We begin with the raw amino-acid sequence, 807 residues long: Phenylalanine--tRNA ligase beta subunit (807 aa).

A tRNA-binding domain is found at 39 to 153 (SARAQGVVVG…SLPPNGSPVA (115 aa)). The region spanning 407 to 491 (AEAGPVLLRR…RLVGFDRFGA (85 aa)) is the B5 domain. Residues aspartate 469, aspartate 475, glutamate 478, and glutamate 479 each contribute to the Mg(2+) site. The region spanning 713-806 (PTVPFSERDL…LSKQFQAELR (94 aa)) is the FDX-ACB domain.

It belongs to the phenylalanyl-tRNA synthetase beta subunit family. Type 1 subfamily. In terms of assembly, tetramer of two alpha and two beta subunits. The cofactor is Mg(2+).

The protein localises to the cytoplasm. It catalyses the reaction tRNA(Phe) + L-phenylalanine + ATP = L-phenylalanyl-tRNA(Phe) + AMP + diphosphate + H(+). This is Phenylalanine--tRNA ligase beta subunit from Synechococcus sp. (strain CC9605).